A 503-amino-acid chain; its full sequence is Cytochrome P450 3A43 (503 aa).

Cys-442 is a binding site for heme.

Belongs to the cytochrome P450 family. The cofactor is heme. Highest expression level in prostate. Also expressed in liver, kidney, pancreas, fetal liver and fetal skeletal muscle.

It is found in the endoplasmic reticulum membrane. The protein localises to the microsome membrane. The catalysed reaction is an organic molecule + reduced [NADPH--hemoprotein reductase] + O2 = an alcohol + oxidized [NADPH--hemoprotein reductase] + H2O + H(+). In terms of biological role, exhibits low testosterone 6-beta-hydroxylase activity. This chain is Cytochrome P450 3A43 (CYP3A43), found in Homo sapiens (Human).